A 282-amino-acid chain; its full sequence is UDP-3-O-acyl-N-acetylglucosamine deacetylase (282 aa).

Zn(2+)-binding residues include histidine 74, histidine 226, and aspartate 230. Residue histidine 253 is the Proton donor of the active site.

The protein belongs to the LpxC family. Requires Zn(2+) as cofactor.

The catalysed reaction is a UDP-3-O-[(3R)-3-hydroxyacyl]-N-acetyl-alpha-D-glucosamine + H2O = a UDP-3-O-[(3R)-3-hydroxyacyl]-alpha-D-glucosamine + acetate. The protein operates within glycolipid biosynthesis; lipid IV(A) biosynthesis; lipid IV(A) from (3R)-3-hydroxytetradecanoyl-[acyl-carrier-protein] and UDP-N-acetyl-alpha-D-glucosamine: step 2/6. Catalyzes the hydrolysis of UDP-3-O-myristoyl-N-acetylglucosamine to form UDP-3-O-myristoylglucosamine and acetate, the committed step in lipid A biosynthesis. In Aquifex aeolicus (strain VF5), this protein is UDP-3-O-acyl-N-acetylglucosamine deacetylase.